A 116-amino-acid polypeptide reads, in one-letter code: Glycine-rich protein 3 short isoform (116 aa).

An N-terminal signal peptide occupies residues 1–24; sequence MASKTLLLLGLFAFLFIVSEMAAA. The segment at 27 to 83 is disordered; the sequence is VKSESEETVKPEQHGGGFGDNGGGRYQGGGGHGGHGGGGYQGGGGRYQGGGGRQGGG. The segment covering 29–39 has biased composition (basic and acidic residues); that stretch reads SESEETVKPEQ. Gly residues predominate over residues 40 to 83; that stretch reads HGGGFGDNGGGRYQGGGGHGGHGGGGYQGGGGRYQGGGGRQGGG. 5 consecutive repeat copies span residues 54–59, 62–67, 68–73, 75–80, and 81–86. The interval 54 to 86 is 5 X 6 AA tandem repeats of G-G-G-G-[HYRS]-[GYQ]; it reads GGGGHGGHGGGGYQGGGGRYQGGGGRQGGGGSY.

This sequence belongs to the GRP family. In terms of assembly, interacts with WAK1 (via the extracellular domain). Component of a 500 kDa complex, composed of GRP3 or GRP3-S, WAK1 and KAPP.

The protein resides in the secreted. It localises to the extracellular space. It is found in the extracellular matrix. Its function is as follows. Regulates the function of the receptor protein kinase WAK1. In Arabidopsis thaliana (Mouse-ear cress), this protein is Glycine-rich protein 3 short isoform (GRP3S).